The chain runs to 66 residues: Beta-mammal toxin Cv5 (66 aa).

The LCN-type CS-alpha/beta domain occupies 1-66 (KEGYIVNYYD…VWPLPKKKCN (66 aa)). Disulfide bonds link Cys12–Cys65, Cys16–Cys41, Cys25–Cys46, and Cys29–Cys48.

In terms of tissue distribution, expressed by the venom gland.

Its subcellular location is the secreted. With respect to regulation, is susceptible to be neutralized by human antibodies scFvs 10FG2 and HV. Functionally, beta toxins bind voltage-independently at site-4 of sodium channels (Nav) and reduces peak current and shifts the voltage of activation toward more negative potentials thereby affecting sodium channel activation and promoting spontaneous and repetitive firing. This toxin is moderately toxic to mice. In Centruroides villegasi (Scorpion), this protein is Beta-mammal toxin Cv5.